The chain runs to 251 residues: tRNA (guanine-N(1)-)-methyltransferase (251 aa).

S-adenosyl-L-methionine contacts are provided by residues glycine 113 and 133 to 138; that span reads MGDYVL.

It belongs to the RNA methyltransferase TrmD family. In terms of assembly, homodimer.

Its subcellular location is the cytoplasm. It carries out the reaction guanosine(37) in tRNA + S-adenosyl-L-methionine = N(1)-methylguanosine(37) in tRNA + S-adenosyl-L-homocysteine + H(+). Functionally, specifically methylates guanosine-37 in various tRNAs. The protein is tRNA (guanine-N(1)-)-methyltransferase of Sodalis glossinidius (strain morsitans).